The chain runs to 503 residues: Cytochrome P450 3A12 (503 aa).

Cysteine 442 is a heme binding site.

This sequence belongs to the cytochrome P450 family. Requires heme as cofactor.

It is found in the endoplasmic reticulum membrane. It localises to the microsome membrane. The enzyme catalyses an organic molecule + reduced [NADPH--hemoprotein reductase] + O2 = an alcohol + oxidized [NADPH--hemoprotein reductase] + H2O + H(+). Functionally, cytochromes P450 are a group of heme-thiolate monooxygenases. In liver microsomes, this enzyme is involved in an NADPH-dependent electron transport pathway. It oxidizes a variety of structurally unrelated compounds, including steroids, fatty acids, and xenobiotics. The polypeptide is Cytochrome P450 3A12 (CYP3A12) (Canis lupus familiaris (Dog)).